The primary structure comprises 90 residues: MNDSVKTSLKRTLVGRVVSNKMDKTVTVLIEHRVKHPIYGKYVVRSKKYHAHDEANTCNEGDLVEIQETRPVSKTKAWTVSRLVEAARVI.

Belongs to the universal ribosomal protein uS17 family. In terms of assembly, part of the 30S ribosomal subunit.

One of the primary rRNA binding proteins, it binds specifically to the 5'-end of 16S ribosomal RNA. This chain is Small ribosomal subunit protein uS17, found in Burkholderia ambifaria (strain ATCC BAA-244 / DSM 16087 / CCUG 44356 / LMG 19182 / AMMD) (Burkholderia cepacia (strain AMMD)).